The following is a 389-amino-acid chain: PqqA peptide cyclase (389 aa).

The Radical SAM core domain occupies 19-235 (VGLPLWLLAE…NEYRVRLEAE (217 aa)). Residues C33, C37, and C40 each coordinate [4Fe-4S] cluster.

It belongs to the radical SAM superfamily. PqqE family. In terms of assembly, interacts with PqqD. The interaction is necessary for activity of PqqE. The cofactor is [4Fe-4S] cluster.

It carries out the reaction [PQQ precursor protein] + S-adenosyl-L-methionine = E-Y cross-linked-[PQQ precursor protein] + 5'-deoxyadenosine + L-methionine + H(+). It functions in the pathway cofactor biosynthesis; pyrroloquinoline quinone biosynthesis. In terms of biological role, catalyzes the cross-linking of a glutamate residue and a tyrosine residue in the PqqA protein as part of the biosynthesis of pyrroloquinoline quinone (PQQ). The sequence is that of PqqA peptide cyclase from Pseudomonas savastanoi pv. phaseolicola (strain 1448A / Race 6) (Pseudomonas syringae pv. phaseolicola (strain 1448A / Race 6)).